Consider the following 261-residue polypeptide: uncharacterized protein (261 aa).

One can recognise a Response regulatory domain in the interval 7–122 (TAVLADDEPL…RLASCCEKLQ (116 aa)). 4-aspartylphosphate is present on Asp54. In terms of domain architecture, HTH LytTR-type spans 157 to 261 (LKASKGEEIH…RALQHLFKVS (105 aa)).

This is an uncharacterized protein from Vibrio cholerae serotype O1 (strain ATCC 39315 / El Tor Inaba N16961).